Consider the following 353-residue polypeptide: uncharacterized protein (353 aa).

Residues 1-20 (MLMRSVCFILLAVLLFSLSA) form the signal peptide. Cys21 carries N-palmitoyl cysteine lipidation. Cys21 carries S-diacylglycerol cysteine lipidation.

The protein resides in the cell membrane. This is an uncharacterized protein from Bacillus subtilis (strain 168).